The sequence spans 80 residues: Exodeoxyribonuclease 7 small subunit (80 aa).

The protein belongs to the XseB family. Heterooligomer composed of large and small subunits.

The protein localises to the cytoplasm. The enzyme catalyses Exonucleolytic cleavage in either 5'- to 3'- or 3'- to 5'-direction to yield nucleoside 5'-phosphates.. In terms of biological role, bidirectionally degrades single-stranded DNA into large acid-insoluble oligonucleotides, which are then degraded further into small acid-soluble oligonucleotides. The protein is Exodeoxyribonuclease 7 small subunit of Vibrio vulnificus (strain CMCP6).